The following is a 415-amino-acid chain: DNA primase DnaG (415 aa).

Residues 171 to 250 enclose the Toprim domain; it reads DAIIIVEGRA…AFSPRGKSVE (80 aa). Residues glutamate 177, aspartate 219, and aspartate 221 each coordinate Mg(2+). The interval 280–323 is disordered; the sequence is ELPGDLGGRPARTAPAHDEGGNSDTTGKQAVSQKRIRDGTSKVP. Residues 301 to 311 show a composition bias toward polar residues; the sequence is NSDTTGKQAVS.

It belongs to the archaeal DnaG primase family. In terms of assembly, forms a ternary complex with MCM helicase and DNA. It depends on Mg(2+) as a cofactor.

It carries out the reaction ssDNA + n NTP = ssDNA/pppN(pN)n-1 hybrid + (n-1) diphosphate.. Its function is as follows. RNA polymerase that catalyzes the synthesis of short RNA molecules used as primers for DNA polymerase during DNA replication. In Methanoregula boonei (strain DSM 21154 / JCM 14090 / 6A8), this protein is DNA primase DnaG.